Here is a 338-residue protein sequence, read N- to C-terminus: Protein RecA (338 aa).

Residue 66–73 (GPESSGKT) participates in ATP binding.

It belongs to the RecA family.

The protein localises to the cytoplasm. Functionally, can catalyze the hydrolysis of ATP in the presence of single-stranded DNA, the ATP-dependent uptake of single-stranded DNA by duplex DNA, and the ATP-dependent hybridization of homologous single-stranded DNAs. It interacts with LexA causing its activation and leading to its autocatalytic cleavage. In Geobacter sulfurreducens (strain ATCC 51573 / DSM 12127 / PCA), this protein is Protein RecA.